A 588-amino-acid chain; its full sequence is Probable G-protein coupled receptor 162 (588 aa).

Over 1 to 17 the chain is Extracellular; that stretch reads MARGGAGAEEASLRSNA. Residues 18–38 traverse the membrane as a helical segment; that stretch reads LSWLACGLLALLANAWIILSI. The Cytoplasmic segment spans residues 39 to 49; it reads SAKQQKHKPLE. The chain crosses the membrane as a helical span at residues 50-70; that stretch reads LLLCFLAGTHILMAAVPLTTF. Residues 71–91 are Extracellular-facing; it reads AVVQLRRQASSDYDWNESICK. Residue Asn86 is glycosylated (N-linked (GlcNAc...) asparagine). Residues 92–112 traverse the membrane as a helical segment; it reads VFVSTYYTLALATCFTVASLS. Over 113-133 the chain is Cytoplasmic; the sequence is YHRMWMVRWPVNYRLSNAKKQ. A helical membrane pass occupies residues 134-154; sequence ALHAVMGIWMVSFILSTLPSI. Topologically, residues 155–174 are extracellular; it reads GWHNNGERYYARGCQFIVSK. Residues 175-195 traverse the membrane as a helical segment; it reads IGLGFGVCFSLLLLGGIVMGL. Topologically, residues 196–275 are cytoplasmic; the sequence is VCVAITFYQT…SLQVTNLVSA (80 aa). A helical transmembrane segment spans residues 276–296; it reads IVFLYDSLTGVPILVVSFFSL. The Extracellular portion of the chain corresponds to 297 to 303; that stretch reads KSDSAPP. The chain crosses the membrane as a helical span at residues 304 to 324; that stretch reads WMVLAVLWCSMAQTLLLPSFI. Residues 325-588 lie on the Cytoplasmic side of the membrane; it reads WSCERYRADV…GNPIFPQLTL (264 aa). Phosphoserine is present on residues Ser413 and Ser435. 2 disordered regions span residues 445–474 and 511–550; these read QSRALGGPPEYLGQRHRLEDEEDEEEAEGG and ETPLPSPTASPGHSPRRPRPLGLSPRRLSLGSPESRAVGL. The span at 530–546 shows a compositional bias: low complexity; it reads PLGLSPRRLSLGSPESR.

It belongs to the G-protein coupled receptor 1 family.

The protein localises to the cell membrane. Functionally, orphan receptor. The chain is Probable G-protein coupled receptor 162 (GPR162) from Homo sapiens (Human).